A 255-amino-acid chain; its full sequence is tRNA (guanine-N(7)-)-methyltransferase (255 aa).

The interval 1-30 is disordered; sequence MMHDDPNEAGLPPDDAALPDEAADGADEVN. Positions 17 to 27 are enriched in acidic residues; sequence ALPDEAADGAD. S-adenosyl-L-methionine is bound by residues glutamate 86, glutamate 111, aspartate 138, and aspartate 161. Aspartate 161 is a catalytic residue. Residues lysine 165, aspartate 197, and 232–235 contribute to the substrate site; that span reads TKFE.

Belongs to the class I-like SAM-binding methyltransferase superfamily. TrmB family.

The enzyme catalyses guanosine(46) in tRNA + S-adenosyl-L-methionine = N(7)-methylguanosine(46) in tRNA + S-adenosyl-L-homocysteine. Its pathway is tRNA modification; N(7)-methylguanine-tRNA biosynthesis. Its function is as follows. Catalyzes the formation of N(7)-methylguanine at position 46 (m7G46) in tRNA. This chain is tRNA (guanine-N(7)-)-methyltransferase, found in Burkholderia vietnamiensis (strain G4 / LMG 22486) (Burkholderia cepacia (strain R1808)).